The primary structure comprises 84 residues: U8-theraphotoxin-Hhn1a (84 aa).

The N-terminal stretch at 1-21 (MKVVLLECLVWMMAMMELVSC) is a signal peptide. Disulfide bonds link cysteine 23/cysteine 35, cysteine 29/cysteine 44, cysteine 34/cysteine 67, cysteine 54/cysteine 75, and cysteine 69/cysteine 81.

The protein belongs to the AVIT (prokineticin) family. As to expression, expressed by the venom gland.

It localises to the secreted. The polypeptide is U8-theraphotoxin-Hhn1a (Cyriopagopus hainanus (Chinese bird spider)).